We begin with the raw amino-acid sequence, 132 residues long: Gamma-crystallin-5 (132 aa).

Residues 1-40 form the Beta/gamma crystallin 'Greek key' 2 domain; the sequence is ILYEQPSYRGHQYYLWKGEYPDFQRWMGFNDSIRSCRMSP. Residues 41 to 45 are connecting peptide; it reads YHQGQ. 2 Beta/gamma crystallin 'Greek key' domains span residues 46–86 and 87–129; these read YKMR…NVFD and GNWM…RRVH.

This sequence belongs to the beta/gamma-crystallin family. In terms of assembly, monomer.

Its function is as follows. Crystallins are the dominant structural components of the vertebrate eye lens. This Xenopus laevis (African clawed frog) protein is Gamma-crystallin-5 (cryg5).